Consider the following 89-residue polypeptide: MQLTKTQFVRCVFLLLANSKKYTIPQAVRISYRLLDKTRVSLKTKERLLVLLDALESGKITPREFTKRLFLEYPKPSDKVKVLSLKIFE.

The signal sequence occupies residues 1-19 (MQLTKTQFVRCVFLLLANS).

This is an uncharacterized protein from Sulfolobus islandicus filamentous virus (isolate Iceland/Hveragerdi) (SIFV).